Consider the following 185-residue polypeptide: Ribosome-recycling factor (185 aa).

The protein belongs to the RRF family.

It is found in the cytoplasm. Functionally, responsible for the release of ribosomes from messenger RNA at the termination of protein biosynthesis. May increase the efficiency of translation by recycling ribosomes from one round of translation to another. The protein is Ribosome-recycling factor of Helicobacter hepaticus (strain ATCC 51449 / 3B1).